Consider the following 271-residue polypeptide: Zinc finger protein 501 (271 aa).

9 consecutive C2H2-type zinc fingers follow at residues 22-44 (SKCSECGRFFTQRSSLTQHQRIH), 50-72 (YVCSECGSCFRKQSNLTQHLRIH), 78-100 (YKCNECEKAFQTKAILVQHLRIH), 106-128 (YKCNECGKAFCQSPSLIKHQRIH), 134-156 (YKCAECGKAFSQSVCLTRHQRSH), 162-184 (FKCNECGKAFNQSACLMQHQRIH), 190-212 (YTCTECGKAFTQNSSLVEHERTH), 218-240 (YKCSECEKTFRKQAHLSEHYRIH), and 246-268 (YECFGCGKSFRHSSALLRHQRLH).

It belongs to the krueppel C2H2-type zinc-finger protein family.

The protein localises to the nucleus. It is found in the nucleolus. Its function is as follows. May be involved in transcriptional regulation. Essential for Golgi structural integrity. The chain is Zinc finger protein 501 (ZNF501) from Pongo abelii (Sumatran orangutan).